A 397-amino-acid chain; its full sequence is Phosphoglycerate kinase (397 aa).

Residues 21-23 (DVN), R36, 59-62 (HFGR), R119, and R152 each bind substrate. ATP-binding positions include K202, E324, and 354-357 (GGDT).

It belongs to the phosphoglycerate kinase family. In terms of assembly, monomer.

It localises to the cytoplasm. It catalyses the reaction (2R)-3-phosphoglycerate + ATP = (2R)-3-phospho-glyceroyl phosphate + ADP. It participates in carbohydrate degradation; glycolysis; pyruvate from D-glyceraldehyde 3-phosphate: step 2/5. The chain is Phosphoglycerate kinase from Cereibacter sphaeroides (strain ATCC 17025 / ATH 2.4.3) (Rhodobacter sphaeroides).